We begin with the raw amino-acid sequence, 80 residues long: Large ribosomal subunit protein uL29 (80 aa).

Belongs to the universal ribosomal protein uL29 family.

This Saccharopolyspora erythraea (strain ATCC 11635 / DSM 40517 / JCM 4748 / NBRC 13426 / NCIMB 8594 / NRRL 2338) protein is Large ribosomal subunit protein uL29.